The primary structure comprises 757 residues: Lysyl oxidase homolog 4 (757 aa).

The signal sequence occupies residues 1–25 (MMWPQPPTFSLFLLLLLSQAPSSRP). 4 consecutive SRCR domains span residues 33–134 (LRLV…VVCH), 160–288 (VRLK…VSCV), 312–412 (VRLR…VRCN), and 422–530 (VRLA…VACM). Disulfide bonds link C59-C123, C72-C133, C103-C113, C192-C277, C205-C287, C252-C262, C337-C401, C350-C411, C381-C391, C451-C516, C464-C529, C498-C508, C559-C565, C611-C659, C643-C649, C671-C681, and C718-C732. N-linked (GlcNAc...) asparagine glycosylation is present at N199. Residues 534–737 (PDLVMNAQLV…WLHNCHTGDS (204 aa)) are lysyl-oxidase like. Positions 612, 614, and 616 each coordinate Cu cation. A glycan (N-linked (GlcNAc...) asparagine) is linked at N630. Residues 639-675 (KASFCLEDTNCPSGVQRRYACANFGEQGVAVGCWDTY) constitute a cross-link (lysine tyrosylquinone (Lys-Tyr)). Y675 is subject to 2',4',5'-topaquinone.

It belongs to the lysyl oxidase family. The cofactor is Cu cation. Lysine tyrosylquinone residue is required as a cofactor. In terms of processing, the lysine tyrosylquinone cross-link (LTQ) is generated by condensation of the epsilon-amino group of a lysine with a topaquinone produced by oxidation of tyrosine. May be proteolytically cleaved by BMP1.

Its subcellular location is the secreted. The protein localises to the extracellular space. The catalysed reaction is L-lysyl-[protein] + O2 + H2O = (S)-2-amino-6-oxohexanoyl-[protein] + H2O2 + NH4(+). Its function is as follows. Catalyzes the oxidative deamination of lysine and hydroxylysine residues in collagen and elastin, resulting in the formation of covalent cross-linkages, and the stabilization of collagen and elastin fibers. The protein is Lysyl oxidase homolog 4 (Loxl4) of Mus musculus (Mouse).